Reading from the N-terminus, the 385-residue chain is Cytochrome b (385 aa).

Transmembrane regions (helical) follow at residues 32 to 52 (FGSL…TLAM), 76 to 98 (WLVR…LHIG), 113 to 133 (TWAI…LGYV), and 179 to 199 (FFAL…MHLI). Heme b is bound by residues His-82 and His-96. 2 residues coordinate heme b: His-183 and His-197. Position 202 (His-202) interacts with a ubiquinone. The next 4 membrane-spanning stretches (helical) occupy residues 226–246 (FIFK…IFVF), 290–310 (LLGV…PITD), 322–342 (LSKV…QIGA), and 349–369 (FIEL…VIVP).

This sequence belongs to the cytochrome b family. In terms of assembly, fungal cytochrome b-c1 complex contains 10 subunits; 3 respiratory subunits, 2 core proteins and 5 low-molecular weight proteins. Cytochrome b-c1 complex is a homodimer. Requires heme b as cofactor.

Its subcellular location is the mitochondrion inner membrane. In terms of biological role, component of the ubiquinol-cytochrome c reductase complex (complex III or cytochrome b-c1 complex) that is part of the mitochondrial respiratory chain. The b-c1 complex mediates electron transfer from ubiquinol to cytochrome c. Contributes to the generation of a proton gradient across the mitochondrial membrane that is then used for ATP synthesis. The sequence is that of Cytochrome b (cob) from Aspergillus tubingensis.